The sequence spans 620 residues: Mitochondrial Rho GTPase 2 (620 aa).

Topologically, residues 1 to 594 (MKRDVRILLL…ELHTTSFWLR (594 aa)) are cytoplasmic. Residues 2–168 (KRDVRILLLG…FYYAQKAVLH (167 aa)) enclose the Miro 1 domain. GTP-binding residues include glycine 16, lysine 17, threonine 18, and serine 19. Threonine 18 serves as a coordination point for Mg(2+). Mg(2+) contacts are provided by proline 35 and aspartate 57. Serine 59 serves as a coordination point for GTP. A Glycyl lysine isopeptide (Lys-Gly) (interchain with G-Cter in ubiquitin) cross-link involves residue lysine 96. Asparagine 118, lysine 119, aspartate 121, alanine 149, and lysine 150 together coordinate GTP. A Glycyl lysine isopeptide (Lys-Gly) (interchain with G-Cter in ubiquitin) cross-link involves residue lysine 119. Lysine 164 participates in a covalent cross-link: Glycyl lysine isopeptide (Lys-Gly) (interchain with G-Cter in ubiquitin). EF-hand domains lie at 184–219 (ACAQALTRIFRLSDQDMDQALSDQELNAFQTCCFGH) and 304–339 (HGYQFAQRMLEKHDQDRDGALSPAELESLFSVFPGP). Residues aspartate 197, aspartate 199, aspartate 201, glutamate 208, aspartate 317, aspartate 319, aspartate 321, and glutamate 328 each coordinate Ca(2+). The disordered stretch occupies residues 340 to 364 (PWGPQLPRHRPHRGRSAAPARVPLP). Residues 415 to 578 (RNVLLCKVLG…FARLATMATF (164 aa)) form the Miro 2 domain. Residues glycine 427, glycine 429, lysine 430, and serine 431 each coordinate GTP. Mg(2+) contacts are provided by serine 431 and glutamate 473. Positions 527, 529, and 558 each coordinate GTP. Residues 595–617 (VALGAVGAAVAAILSFSLYRVLV) traverse the membrane as a helical; Anchor for type IV membrane protein segment. The Mitochondrial intermembrane portion of the chain corresponds to 618–620 (KSR).

This sequence belongs to the mitochondrial Rho GTPase family. As to quaternary structure, homodimer. Interacts with the kinesin-binding proteins TRAK1/OIP106 and TRAK2/GRIF1, forming a link between mitochondria and the trafficking apparatus of the microtubules. Interacts with ARMCX3. Found in a complex with KIF5B, OGT, RHOT1 and TRAK1. Ubiquitinated by PRKN in a PINK1-dependent manner, leading to its degradation.

Its subcellular location is the mitochondrion outer membrane. The enzyme catalyses GTP + H2O = GDP + phosphate + H(+). It catalyses the reaction ATP + H2O = ADP + phosphate + H(+). It carries out the reaction UTP + H2O = UDP + phosphate + H(+). Functionally, atypical mitochondrial nucleoside-triphosphatase (NTPase) involved in mitochondrial trafficking. Probably involved in control of anterograde transport of mitochondria and their subcellular distribution. Can hydrolyze GTP, ATP and UTP. This is Mitochondrial Rho GTPase 2 (RHOT2) from Sus scrofa (Pig).